Consider the following 165-residue polypeptide: Small ribosomal subunit protein eS10 (165 aa).

The residue at position 12 (Y12) is a Phosphotyrosine. Positions 92 to 165 (ATLRRSRPET…FGRGRGQPPQ (74 aa)) are disordered. The span at 97-128 (SRPETGRPRPKGLEGERPARLTRGEADRDTYR) shows a compositional bias: basic and acidic residues. Glycyl lysine isopeptide (Lys-Gly) (interchain with G-Cter in ubiquitin) cross-links involve residues K138 and K139. S146 carries the post-translational modification Phosphoserine. Omega-N-methylarginine is present on R153. Residues 154–165 (GGFGRGRGQPPQ) show a composition bias toward gly residues. 2 positions are modified to symmetric dimethylarginine: R158 and R160.

This sequence belongs to the eukaryotic ribosomal protein eS10 family. In terms of assembly, component of the small ribosomal subunit. The methylated form interacts with NPM1. Methylated by PRMT5. Methylation is necessary for its interaction with NPS1, its localization in the granular component (GC) region of the nucleolus, for the proper assembly of ribosomes, protein synthesis and optimal cell proliferation. Post-translationally, monoubiquitinated by ZNF598 when a ribosome has stalled during translation of poly(A) sequences, leading to preclude synthesis of a long poly-lysine tail and initiate the ribosome quality control (RQC) pathway to degrade the potentially detrimental aberrant nascent polypeptide. Deubiquitinated by OTUD3 and USP21, antagonizing ZNF598 activity. Deubiquitinated by OTUD1, antagonizing ZNF598 activity and stimulating formation of polysomes: deubiquitination by OTUD1 promotes stability and translation of a subset mRNAs with a high abundance of rare codons can limit the translation rate. Deubiquitinated by USP10.

It localises to the cytoplasm. It is found in the nucleus. Its subcellular location is the nucleolus. Its function is as follows. Component of the 40S ribosomal subunit. The ribosome is a large ribonucleoprotein complex responsible for the synthesis of proteins in the cell. This Oryctolagus cuniculus (Rabbit) protein is Small ribosomal subunit protein eS10 (RPS10).